The following is a 331-amino-acid chain: Anthranilate phosphoribosyltransferase (331 aa).

5-phospho-alpha-D-ribose 1-diphosphate contacts are provided by residues G78, 81 to 82 (GD), T86, 88 to 91 (NVST), 106 to 114 (KHGNYSVSS), and S118. G78 lines the anthranilate pocket. Residue S90 participates in Mg(2+) binding. N109 serves as a coordination point for anthranilate. R164 lines the anthranilate pocket. Mg(2+) contacts are provided by D222 and E223.

The protein belongs to the anthranilate phosphoribosyltransferase family. In terms of assembly, homodimer. It depends on Mg(2+) as a cofactor.

The enzyme catalyses N-(5-phospho-beta-D-ribosyl)anthranilate + diphosphate = 5-phospho-alpha-D-ribose 1-diphosphate + anthranilate. Its pathway is amino-acid biosynthesis; L-tryptophan biosynthesis; L-tryptophan from chorismate: step 2/5. In terms of biological role, catalyzes the transfer of the phosphoribosyl group of 5-phosphorylribose-1-pyrophosphate (PRPP) to anthranilate to yield N-(5'-phosphoribosyl)-anthranilate (PRA). This is Anthranilate phosphoribosyltransferase from Haloarcula marismortui (strain ATCC 43049 / DSM 3752 / JCM 8966 / VKM B-1809) (Halobacterium marismortui).